A 230-amino-acid chain; its full sequence is Large ribosomal subunit protein uL1 (230 aa).

It belongs to the universal ribosomal protein uL1 family. As to quaternary structure, part of the 50S ribosomal subunit.

Binds directly to 23S rRNA. The L1 stalk is quite mobile in the ribosome, and is involved in E site tRNA release. Its function is as follows. Protein L1 is also a translational repressor protein, it controls the translation of the L11 operon by binding to its mRNA. In Staphylococcus aureus (strain Mu3 / ATCC 700698), this protein is Large ribosomal subunit protein uL1.